A 166-amino-acid chain; its full sequence is 3-isopropylmalate dehydratase small subunit (166 aa).

This sequence belongs to the LeuD family. LeuD type 2 subfamily. As to quaternary structure, heterodimer of LeuC and LeuD.

It catalyses the reaction (2R,3S)-3-isopropylmalate = (2S)-2-isopropylmalate. Its pathway is amino-acid biosynthesis; L-leucine biosynthesis; L-leucine from 3-methyl-2-oxobutanoate: step 2/4. Catalyzes the isomerization between 2-isopropylmalate and 3-isopropylmalate, via the formation of 2-isopropylmaleate. This Nautilia profundicola (strain ATCC BAA-1463 / DSM 18972 / AmH) protein is 3-isopropylmalate dehydratase small subunit.